The sequence spans 301 residues: Helicase VP6-A (301 aa).

2 disordered regions span residues 1-99 and 163-208; these read MIDW…TTGT and RRKE…TSVG. 3 stretches are compositionally biased toward basic and acidic residues: residues 8–30, 37–55, and 67–81; these read ESGK…KDGE, GQKK…DRRV, and GFRE…RGDG. Lys-82 contacts ATP. Composition is skewed to basic and acidic residues over residues 163–177 and 186–202; these read RRKE…VAEK and VHGD…KTPE.

This sequence belongs to the orbivirus VP6 family. Homohexamer.

The protein resides in the virion. The catalysed reaction is ATP + H2O = ADP + phosphate + H(+). In terms of biological role, ATP dependent RNA helicase essential for RNA packaging and viral transcription. Possesses ss- and dsRNA-binding capacity. The chain is Helicase VP6-A (Segment-9) from Bluetongue virus 2 (isolate USA) (BTV 2).